A 76-amino-acid polypeptide reads, in one-letter code: MNKALFLCLVVLCAAVVFAAEDLQKAKHAPFKRAAPCFCPGKPDRGDLWIFRGTCPGGYGYTSNCYKWPNICCYPH.

The signal sequence occupies residues 1–19; sequence MNKALFLCLVVLCAAVVFA. Residues 20 to 31 constitute a propeptide that is removed on maturation; the sequence is AEDLQKAKHAPF. 3 disulfides stabilise this stretch: C37–C72, C39–C65, and C55–C73.

Belongs to the sea anemone type 3 (BDS) potassium channel toxin family. As to expression, moderately expressed in the ectodermal tissue from the distal and proximal tentacles, body wall, and oral disk.

The protein resides in the secreted. It localises to the nematocyst. In terms of biological role, blocks Kv3 voltage-gated potassium channels. Reduces blood pressure. The protein is Kappa-actitoxin-Avd4c of Anemonia viridis (Snakelocks anemone).